The sequence spans 314 residues: MRPSSYNQRTLSKIASLQGVGLHSGARVTLTLRPAPPGHGIVFVRTDLARPVSIPALAEYVVDTSLATTLGRDGVRVGTVEHLMAALAGMGIDNLRVELDGPEVPIMDGSAAPFAALIQSAGVREQEAPKELLVIRKAVSVVDGDKQASLTPARHFRISCTIDFEHPVIQGQSFDLDFGDRDFAREISRARTFGFLRDVEKLKQMGLARGGSLENAIVVDEVSILNPDGLRFPDEFVRHKILDAIGDVSLFGRPVIGHMTAYKTGHALNHKLVRKVMSDPSCYEIVPARRRELEGMGLGFSGLAGALDFEPLVA.

His-82, His-239, and Asp-243 together coordinate Zn(2+). The active-site Proton donor is His-266.

Belongs to the LpxC family. Requires Zn(2+) as cofactor.

It catalyses the reaction a UDP-3-O-[(3R)-3-hydroxyacyl]-N-acetyl-alpha-D-glucosamine + H2O = a UDP-3-O-[(3R)-3-hydroxyacyl]-alpha-D-glucosamine + acetate. The protein operates within glycolipid biosynthesis; lipid IV(A) biosynthesis; lipid IV(A) from (3R)-3-hydroxytetradecanoyl-[acyl-carrier-protein] and UDP-N-acetyl-alpha-D-glucosamine: step 2/6. Functionally, catalyzes the hydrolysis of UDP-3-O-myristoyl-N-acetylglucosamine to form UDP-3-O-myristoylglucosamine and acetate, the committed step in lipid A biosynthesis. The sequence is that of UDP-3-O-acyl-N-acetylglucosamine deacetylase from Myxococcus xanthus (strain DK1622).